The sequence spans 451 residues: Bifunctional protein GlmU (451 aa).

A pyrophosphorylase region spans residues 1–225; the sequence is MVVVAILAAG…YQEILGINDR (225 aa). UDP-N-acetyl-alpha-D-glucosamine is bound by residues 7 to 10, Lys21, Gln72, and 77 to 78; these read LAAG and GT. Asp102 provides a ligand contact to Mg(2+). Residues Gly139, Glu154, Asn169, and Asn223 each contribute to the UDP-N-acetyl-alpha-D-glucosamine site. Asn223 contacts Mg(2+). Positions 226-246 are linker; that stretch reads LQLATAYEILQRRVKEQWMMA. Positions 247-451 are N-acetyltransferase; it reads GVTLIDPNSI…LGWRRKSGES (205 aa). Residues Arg328 and Lys346 each contribute to the UDP-N-acetyl-alpha-D-glucosamine site. The Proton acceptor role is filled by His358. UDP-N-acetyl-alpha-D-glucosamine is bound by residues Tyr361 and Asn372. Acetyl-CoA is bound by residues Ala375, 381–382, Ser400, Ala418, and Arg435; that span reads NY.

This sequence in the N-terminal section; belongs to the N-acetylglucosamine-1-phosphate uridyltransferase family. The protein in the C-terminal section; belongs to the transferase hexapeptide repeat family. Homotrimer. Mg(2+) serves as cofactor.

It is found in the cytoplasm. The enzyme catalyses alpha-D-glucosamine 1-phosphate + acetyl-CoA = N-acetyl-alpha-D-glucosamine 1-phosphate + CoA + H(+). The catalysed reaction is N-acetyl-alpha-D-glucosamine 1-phosphate + UTP + H(+) = UDP-N-acetyl-alpha-D-glucosamine + diphosphate. It functions in the pathway nucleotide-sugar biosynthesis; UDP-N-acetyl-alpha-D-glucosamine biosynthesis; N-acetyl-alpha-D-glucosamine 1-phosphate from alpha-D-glucosamine 6-phosphate (route II): step 2/2. The protein operates within nucleotide-sugar biosynthesis; UDP-N-acetyl-alpha-D-glucosamine biosynthesis; UDP-N-acetyl-alpha-D-glucosamine from N-acetyl-alpha-D-glucosamine 1-phosphate: step 1/1. Its pathway is bacterial outer membrane biogenesis; LPS lipid A biosynthesis. Its function is as follows. Catalyzes the last two sequential reactions in the de novo biosynthetic pathway for UDP-N-acetylglucosamine (UDP-GlcNAc). The C-terminal domain catalyzes the transfer of acetyl group from acetyl coenzyme A to glucosamine-1-phosphate (GlcN-1-P) to produce N-acetylglucosamine-1-phosphate (GlcNAc-1-P), which is converted into UDP-GlcNAc by the transfer of uridine 5-monophosphate (from uridine 5-triphosphate), a reaction catalyzed by the N-terminal domain. In Nostoc sp. (strain PCC 7120 / SAG 25.82 / UTEX 2576), this protein is Bifunctional protein GlmU.